Consider the following 76-residue polypeptide: Sec-independent protein translocase protein TatA (76 aa).

A helical transmembrane segment spans residues 1 to 21 (MGSFSIWHWLIVLAVVLLLFG). Residues 43-76 (MSDEDAKDDARDSGRTIDAKADETVNDVKKTTKS) form a disordered region. A compositionally biased stretch (basic and acidic residues) spans 50 to 76 (DDARDSGRTIDAKADETVNDVKKTTKS).

It belongs to the TatA/E family. In terms of assembly, the Tat system comprises two distinct complexes: a TatABC complex, containing multiple copies of TatA, TatB and TatC subunits, and a separate TatA complex, containing only TatA subunits. Substrates initially bind to the TatABC complex, which probably triggers association of the separate TatA complex to form the active translocon.

The protein resides in the cell inner membrane. Part of the twin-arginine translocation (Tat) system that transports large folded proteins containing a characteristic twin-arginine motif in their signal peptide across membranes. TatA could form the protein-conducting channel of the Tat system. The chain is Sec-independent protein translocase protein TatA from Brucella anthropi (strain ATCC 49188 / DSM 6882 / CCUG 24695 / JCM 21032 / LMG 3331 / NBRC 15819 / NCTC 12168 / Alc 37) (Ochrobactrum anthropi).